Consider the following 293-residue polypeptide: Ethanolamine ammonia-lyase small subunit (293 aa).

Residues Val-207 and Glu-228 each contribute to the adenosylcob(III)alamin site.

The protein belongs to the EutC family. The basic unit is a heterodimer which dimerizes to form tetramers. The heterotetramers trimerize; 6 large subunits form a core ring with 6 small subunits projecting outwards. The cofactor is adenosylcob(III)alamin.

Its subcellular location is the bacterial microcompartment. The enzyme catalyses ethanolamine = acetaldehyde + NH4(+). It participates in amine and polyamine degradation; ethanolamine degradation. In terms of biological role, catalyzes the deamination of various vicinal amino-alcohols to oxo compounds. Allows this organism to utilize ethanolamine as the sole source of nitrogen and carbon in the presence of external vitamin B12. This chain is Ethanolamine ammonia-lyase small subunit, found in Listeria monocytogenes serotype 4a (strain HCC23).